We begin with the raw amino-acid sequence, 60 residues long: Alpha-conotoxin-like 289 (60 aa).

An N-terminal signal peptide occupies residues 1–16 (MFTVFLLVVLATTVVS). Residues 17–42 (FTSDRAFRGRNAAAKASGLVGLTDKR) constitute a propeptide that is removed on maturation. Gln-43 bears the Pyrrolidone carboxylic acid mark. Intrachain disulfides connect Cys-45–Cys-51 and Cys-46–Cys-59. The segment at 47–49 (SYP) is ser-Xaa-Pro motif, crucial for potent interaction with nAChR. The residue at position 59 (Cys-59) is a Cysteine amide.

The protein belongs to the conotoxin A superfamily. As to expression, expressed by the venom duct.

Its subcellular location is the secreted. Functionally, alpha-conotoxins act on postsynaptic membranes, they bind to the nicotinic acetylcholine receptors (nAChR) and thus inhibit them. The polypeptide is Alpha-conotoxin-like 289 (Conus ammiralis (Admiral cone)).